The following is a 302-amino-acid chain: D-alanine--D-alanine ligase (302 aa).

The ATP-grasp domain occupies Lys100–Glu295. Gln126–Thr180 is a binding site for ATP. Asp250, Glu262, and Asn264 together coordinate Mg(2+).

It belongs to the D-alanine--D-alanine ligase family. Requires Mg(2+) as cofactor. The cofactor is Mn(2+).

It localises to the cytoplasm. The enzyme catalyses 2 D-alanine + ATP = D-alanyl-D-alanine + ADP + phosphate + H(+). Its pathway is cell wall biogenesis; peptidoglycan biosynthesis. Functionally, cell wall formation. This chain is D-alanine--D-alanine ligase, found in Maridesulfovibrio salexigens (strain ATCC 14822 / DSM 2638 / NCIMB 8403 / VKM B-1763) (Desulfovibrio salexigens).